A 282-amino-acid polypeptide reads, in one-letter code: Aquaporin NIP1-1 (282 aa).

2 consecutive transmembrane segments (helical) span residues 46–66 (IIAE…AVTI) and 74–94 (ITFP…VYAV). The NPA 1 signature appears at 103–105 (NPA). 3 helical membrane passes run 125–145 (VLAQ…MFGG), 162–182 (SLVI…GVAT), and 186–206 (AIGE…VLIA). The NPA 2 motif lies at 215 to 217 (NPA). A helical transmembrane segment spans residues 232–252 (IWVYVVGPVVGAVAGAWAYNL).

Belongs to the MIP/aquaporin (TC 1.A.8) family. NIP (TC 1.A.8.12) subfamily.

The protein localises to the membrane. Aquaporins facilitate the transport of water and small neutral solutes across cell membranes. The sequence is that of Aquaporin NIP1-1 (NIP1-1) from Zea mays (Maize).